A 357-amino-acid chain; its full sequence is Probable cinnamyl alcohol dehydrogenase (357 aa).

A Zn(2+)-binding site is contributed by Cys47. NADP(+) is bound at residue Ser49. Residues His69, Glu70, Cys100, Cys103, Cys106, Cys114, and Cys163 each coordinate Zn(2+). NADP(+) contacts are provided by residues Thr167, 188–193 (GLGGVG), 211–216 (SSSDKK), Thr251, Gly275, and 298–300 (SFI).

Belongs to the zinc-containing alcohol dehydrogenase family. In terms of assembly, homodimer. The cofactor is Zn(2+).

The enzyme catalyses (E)-cinnamyl alcohol + NADP(+) = (E)-cinnamaldehyde + NADPH + H(+). It carries out the reaction (E)-coniferol + NADP(+) = (E)-coniferaldehyde + NADPH + H(+). It catalyses the reaction (E)-sinapyl alcohol + NADP(+) = (E)-sinapaldehyde + NADPH + H(+). The catalysed reaction is (E)-4-coumaroyl alcohol + NADP(+) = (E)-4-coumaraldehyde + NADPH + H(+). The enzyme catalyses (E)-caffeyl alcohol + NADP(+) = (E)-caffeyl aldehyde + NADPH + H(+). It participates in aromatic compound metabolism; phenylpropanoid biosynthesis. In terms of biological role, involved in lignin biosynthesis. Catalyzes the final step specific for the production of lignin monomers. Catalyzes the NADPH-dependent reduction of coniferaldehyde, 5-hydroxyconiferaldehyde, sinapaldehyde, 4-coumaraldehyde and caffeyl aldehyde to their respective alcohols. The sequence is that of Probable cinnamyl alcohol dehydrogenase (CAD) from Pinus radiata (Monterey pine).